A 516-amino-acid chain; its full sequence is Protein phosphatase 1H (516 aa).

Disordered stretches follow at residues 102–122 (ADPS…PSGD) and 181–202 (PPTC…SGSQ). Residues 106 to 506 (SVSYTPSRRR…DDISVFIIPL (401 aa)) form the PPM-type phosphatase domain. Residues 190-202 (PNPQLHASASGSQ) show a composition bias toward polar residues.

It belongs to the PP2C family.

It is found in the nucleus. The protein resides in the cytoplasm. The catalysed reaction is O-phospho-L-seryl-[protein] + H2O = L-seryl-[protein] + phosphate. It carries out the reaction O-phospho-L-threonyl-[protein] + H2O = L-threonyl-[protein] + phosphate. This is Protein phosphatase 1H (ppm1h) from Danio rerio (Zebrafish).